The chain runs to 382 residues: Chaperone protein DnaJ (382 aa).

One can recognise a J domain in the interval 5–69 (DYYEILGVSK…EKRARYDRFG (65 aa)). The CR-type zinc-finger motif lies at 137-219 (GKETEIEIPR…CGGTGRVKRR (83 aa)). Zn(2+) is bound by residues Cys-150, Cys-153, Cys-167, Cys-170, Cys-193, Cys-196, Cys-207, and Cys-210. CXXCXGXG motif repeat units follow at residues 150–157 (CDTCQGSG), 167–174 (CPHCHGSG), 193–200 (CPVCGGTG), and 207–214 (CPTCGGTG). Residues 154–175 (QGSGAKPGTSPTSCPHCHGSGQ) form a disordered region.

This sequence belongs to the DnaJ family. Homodimer. Zn(2+) is required as a cofactor.

The protein resides in the cytoplasm. Participates actively in the response to hyperosmotic and heat shock by preventing the aggregation of stress-denatured proteins and by disaggregating proteins, also in an autonomous, DnaK-independent fashion. Unfolded proteins bind initially to DnaJ; upon interaction with the DnaJ-bound protein, DnaK hydrolyzes its bound ATP, resulting in the formation of a stable complex. GrpE releases ADP from DnaK; ATP binding to DnaK triggers the release of the substrate protein, thus completing the reaction cycle. Several rounds of ATP-dependent interactions between DnaJ, DnaK and GrpE are required for fully efficient folding. Also involved, together with DnaK and GrpE, in the DNA replication of plasmids through activation of initiation proteins. This is Chaperone protein DnaJ from Geobacillus kaustophilus (strain HTA426).